The chain runs to 814 residues: MGLPALEFSDCCLDSPHFRETLKSHEAELDKTNKFIKELIKDGKSLISALKNLSSAKRKFADSLNEFKFQCIGDAETDDEMCIARSLQEFAAVLRNLEDERSRMIENASEVLITPLEKFRKEQIGAAREAKKKYDKETEKYCGTLEKHLNLSSKKKESQLQEADSQVDLVRQHFYEVSLEYVFKVQEVQERKMFEFVEPLLAFLQGLFTFYHHGYELAKDFGDFKTQLTISIQNTRNRFEGTRSEVESLMKKMKENPLEHKTISPYTMEGYLYVQEKRHFGTSWVKHYCTYQRDSKQITMVPFDQKSGGKGGEDESVTLKSCTRRKTDSIEKRFCFDVEAVDRPGVITMQALSEEDRRLWMEAMDGREPVYNSNRDSQSEGTAQLDSIGFSIIRKCIHAVETRGINEQGLYRIVGVNSRVQKLLSVLMDPKAASETETDICAEWEIKTVTSALKTYLRMLPGPLMMYQFQRSFIKAAKLENQETRVSEIHSLVHRLPEKNRQMLQLLMNHLANVANNHKQNLMTVANLGVVFGPTLLRPQEETVAAIMDIKFQNIVIEILIENHEKIFNTVPDVPLTNAQLHLSRKKSSDSKPPSCSKRPLTLFHAVPSTEKQEQRNSIINSSLESVSSSANSILNSSSSLQPNLNSSDSNLDVVKPSRPSSLPPNPSPTSPLSPSWPMFSAPSSPMPTSSTSSDSSPIRSVAGFVWFSVAAVVLSLAWSSLHAVFSLLVNFVPCHPNLHLLFDRPEEAVREDSSTPFRKAKALYACQAEHDSELSFTAGTVFDNVHPSQEPGWLEGTLNGKTGLIPENYVEFL.

The BAR domain occupies 7-262 (EFSDCCLDSP…MKENPLEHKT (256 aa)). The PH domain maps to 265–369 (PYTMEGYLYV…WMEAMDGREP (105 aa)). In terms of domain architecture, Rho-GAP spans 383 to 568 (AQLDSIGFSI…ILIENHEKIF (186 aa)). Disordered stretches follow at residues 584–618 (SRKK…QRNS) and 638–696 (SSSL…SSDS). Composition is skewed to low complexity over residues 591–600 (SKPPSCSKRP) and 638–661 (SSSL…SRPS). The span at 662–672 (SLPPNPSPTSP) shows a compositional bias: pro residues. Phosphoserine is present on Ser668. Phosphothreonine is present on Thr670. Ser671 carries the phosphoserine modification. Positions 673–696 (LSPSWPMFSAPSSPMPTSSTSSDS) are enriched in low complexity. The region spanning 756–814 (TPFRKAKALYACQAEHDSELSFTAGTVFDNVHPSQEPGWLEGTLNGKTGLIPENYVEFL) is the SH3 domain.

Interacts with NYAP1, NYAP2 and MYO16. Interacts with MICAL1 and WDR44. Binds to the C-terminus of PTK2/FAK1. Phosphorylated in a PINK1-dependent fashion promoting retrograde mitochondrial trafficking and clustering.

It is found in the cell junction. Its subcellular location is the focal adhesion. The protein resides in the cytoplasm. It localises to the cytoskeleton. The protein localises to the endosome membrane. Functionally, GTPase-activating protein for RHOA and CDC42. Facilitates mitochondrial quality control by promoting Parkin-mediated recruitment of autophagosomes to damaged mitochondria. Associates with MICAL1 on the endosomal membrane to promote Rab8-Rab10-dependent tubule extension. After dissociation of MICAL1, recruits WDR44 which connects the endoplasmic reticulum (ER) with the endosomal tubule, thereby participating in the export of a subset of neosynthesized proteins. The sequence is that of Rho GTPase-activating protein 26 (Arhgap26) from Mus musculus (Mouse).